Reading from the N-terminus, the 421-residue chain is Histidine--tRNA ligase (421 aa).

The protein belongs to the class-II aminoacyl-tRNA synthetase family. As to quaternary structure, homodimer.

It is found in the cytoplasm. It catalyses the reaction tRNA(His) + L-histidine + ATP = L-histidyl-tRNA(His) + AMP + diphosphate + H(+). The sequence is that of Histidine--tRNA ligase from Solidesulfovibrio magneticus (strain ATCC 700980 / DSM 13731 / RS-1) (Desulfovibrio magneticus).